Here is a 417-residue protein sequence, read N- to C-terminus: MDKLIIKGGKKLIGEVSVSGSKNAALPIFVSTILAPGLNEIRNVPFLRDINTTIKVLESLGAVVEGNGNIVRIDTTHVNNVEATYDLVKTMRASVLVLGPLLARHGRARVSLPGGCAIGARPINLHLKGLAALGADIRLEHGYVEAKAKKLKGARINFDISTVGGTEQLMMAAALAKGETVLENAAREPEIIDLAEILIKMGAKIDGAGTDTIRITGVKELAPVAHDVMPDRIEAGTFMVAAAITGGDIKIRNMKLEHLDALVFKLQDAGVEITNRDNVVRVKGPRRPKAVNIKTRPYPGFPTDMQAQFMALMCVADGASVISENIFENRFMHVSELLRFGADITVEGSTATVKGVKKLSGAPVMATDLRASASLILAGLAADNTTEISRIYHLDRGYESIEKKLAGLGADIQRVKE.

Position 22–23 (22–23) interacts with phosphoenolpyruvate; that stretch reads KN. Arg-92 provides a ligand contact to UDP-N-acetyl-alpha-D-glucosamine. Cys-116 (proton donor) is an active-site residue. Residue Cys-116 is modified to 2-(S-cysteinyl)pyruvic acid O-phosphothioketal. Positions 304 and 326 each coordinate UDP-N-acetyl-alpha-D-glucosamine.

It belongs to the EPSP synthase family. MurA subfamily.

Its subcellular location is the cytoplasm. It catalyses the reaction phosphoenolpyruvate + UDP-N-acetyl-alpha-D-glucosamine = UDP-N-acetyl-3-O-(1-carboxyvinyl)-alpha-D-glucosamine + phosphate. Its pathway is cell wall biogenesis; peptidoglycan biosynthesis. In terms of biological role, cell wall formation. Adds enolpyruvyl to UDP-N-acetylglucosamine. This is UDP-N-acetylglucosamine 1-carboxyvinyltransferase from Geobacter sulfurreducens (strain ATCC 51573 / DSM 12127 / PCA).